The primary structure comprises 297 residues: Adrenocorticotropic hormone receptor (297 aa).

The Extracellular portion of the chain corresponds to 1–23; sequence MKHIITPYEHTNDTARNNSDCPD. N-linked (GlcNAc...) asparagine glycosylation is found at Asn12 and Asn17. 2 disulfides stabilise this stretch: Cys21–Cys253 and Cys245–Cys251. Residues 24–49 traverse the membrane as a helical segment; that stretch reads VVLPEEIFFTISIIGVLENLIVLLAV. Over 50–58 the chain is Cytoplasmic; that stretch reads VKNKNLQCP. A helical transmembrane segment spans residues 59 to 79; the sequence is MYFFICSLAISDMLGSLYKIL. Over 80-104 the chain is Extracellular; it reads ENILIMFRNRGYLQPRGNFESTADD. The chain crosses the membrane as a helical span at residues 105 to 126; that stretch reads IIDCMFILSLLGSIFSLSVIAA. Residues 127-147 are Cytoplasmic-facing; sequence DRYITIFHALQYHSIVTMRRT. A helical transmembrane segment spans residues 148–168; that stretch reads IITLTVIWIFCTGSGIAMVIF. The Extracellular segment spans residues 169–180; it reads SHHVPTVLTFTS. Residues 181-199 traverse the membrane as a helical segment; the sequence is LFPLMLVFILCLYIHMFLL. Over 200-217 the chain is Cytoplasmic; that stretch reads ARSHARKISTLPRANMKG. A helical membrane pass occupies residues 218–244; that stretch reads AITLTILLGVFIFCWAPFILHVLLMTF. At 245-256 the chain is on the extracellular side; that stretch reads CPNNPYCVCYMS. A helical membrane pass occupies residues 257–278; the sequence is LFQINGMLIMCNAVIDPFIYAF. At 279-297 the chain is on the cytoplasmic side; that stretch reads RSPELRDAFKKMFSCHRYQ. The S-palmitoyl cysteine moiety is linked to residue Cys293.

This sequence belongs to the G-protein coupled receptor 1 family. As to quaternary structure, homodimer. Interacts with corticotropin (ACTH). Interacts with MRAP; this interaction targets MC2R to the plasma membrane. Interacts with MRAP2; competing with MRAP for binding to MC2R and impairing the binding of corticotropin (ACTH). Post-translationally, ubiquitinated by MGRN1 that may be involved in post-endocytic trafficking and/or degradation of internalized receptor.

The protein localises to the cell membrane. Functionally, hormone receptor primarily expressed in adrenal cortex that plays a key role in regulating adrenocortical function. Upon corticotropin (ACTH) binding, facilitates the release of adrenal glucocorticoids, including cortisol and corticosterone. In addition, MC2R is required for fetal and neonatal adrenal gland development. Mechanistically, activates adenylate cyclase (cAMP), the MAPK cascade as well as the cAMP-dependent protein kinase A pathway leading to steroidogenic factor 1/NR5A1-mediated transcriptional activation. This Mesocricetus auratus (Golden hamster) protein is Adrenocorticotropic hormone receptor (MC2R).